The following is a 203-amino-acid chain: uncharacterized protein (203 aa).

The chain crosses the membrane as a helical span at residues 171-191 (VGYLSIWLKEYWYLVVLFVLI).

Its subcellular location is the membrane. This is an uncharacterized protein from Methanocaldococcus jannaschii (strain ATCC 43067 / DSM 2661 / JAL-1 / JCM 10045 / NBRC 100440) (Methanococcus jannaschii).